The primary structure comprises 919 residues: Probable glucan 1,3-alpha-glucosidase (919 aa).

The signal sequence occupies residues methionine 1 to alanine 28. Aspartate 510 serves as the catalytic Nucleophile. Glutamate 513 is a catalytic residue. The active-site Proton donor is the aspartate 586. Asparagine 802 carries an N-linked (GlcNAc...) asparagine glycan.

Belongs to the glycosyl hydrolase 31 family. As to quaternary structure, heterodimer of a catalytic alpha subunit and a beta subunit.

It localises to the endoplasmic reticulum. It carries out the reaction N(4)-(alpha-D-Glc-(1-&gt;3)-alpha-D-Man-(1-&gt;2)-alpha-D-Man-(1-&gt;2)-alpha-D-Man-(1-&gt;3)-[alpha-D-Man-(1-&gt;2)-alpha-D-Man-(1-&gt;3)-[alpha-D-Man-(1-&gt;2)-alpha-D-Man-(1-&gt;6)]-alpha-D-Man-(1-&gt;6)]-beta-D-Man-(1-&gt;4)-beta-D-GlcNAc-(1-&gt;4)-beta-D-GlcNAc)-L-asparaginyl-[protein] + H2O = N(4)-(alpha-D-Man-(1-&gt;2)-alpha-D-Man-(1-&gt;2)-alpha-D-Man-(1-&gt;3)-[alpha-D-Man-(1-&gt;2)-alpha-D-Man-(1-&gt;3)-[alpha-D-Man-(1-&gt;2)-alpha-D-Man-(1-&gt;6)]-alpha-D-Man-(1-&gt;6)]-beta-D-Man-(1-&gt;4)-beta-D-GlcNAc-(1-&gt;4)-beta-D-GlcNAc)-L-asparaginyl-[protein] (N-glucan mannose isomer 9A1,2,3B1,2,3) + beta-D-glucose. The catalysed reaction is N(4)-(alpha-D-Glc-(1-&gt;3)-alpha-D-Glc-(1-&gt;3)-alpha-D-Man-(1-&gt;2)-alpha-D-Man-(1-&gt;2)-alpha-D-Man-(1-&gt;3)-[alpha-D-Man-(1-&gt;2)-alpha-D-Man-(1-&gt;3)-[alpha-D-Man-(1-&gt;2)-alpha-D-Man-(1-&gt;6)]-alpha-D-Man-(1-&gt;6)]-beta-D-Man-(1-&gt;4)-beta-D-GlcNAc-(1-&gt;4)-beta-D-GlcNAc)-L-asparaginyl-[protein] + H2O = N(4)-(alpha-D-Glc-(1-&gt;3)-alpha-D-Man-(1-&gt;2)-alpha-D-Man-(1-&gt;2)-alpha-D-Man-(1-&gt;3)-[alpha-D-Man-(1-&gt;2)-alpha-D-Man-(1-&gt;3)-[alpha-D-Man-(1-&gt;2)-alpha-D-Man-(1-&gt;6)]-alpha-D-Man-(1-&gt;6)]-beta-D-Man-(1-&gt;4)-beta-D-GlcNAc-(1-&gt;4)-beta-D-GlcNAc)-L-asparaginyl-[protein] + beta-D-glucose. It participates in glycan metabolism; N-glycan metabolism. Its function is as follows. Cleaves sequentially the 2 innermost alpha-1,3-linked glucose residues from the Glc(2)Man(9)GlcNAc(2) oligosaccharide precursor of immature glycoproteins. May be required for defense response elicited by pathogen-associated molecular patterns (PAMPs). In Oryza sativa subsp. japonica (Rice), this protein is Probable glucan 1,3-alpha-glucosidase.